We begin with the raw amino-acid sequence, 350 residues long: Histidinol-phosphate aminotransferase 1 (350 aa).

Position 210 is an N6-(pyridoxal phosphate)lysine (Lys-210).

This sequence belongs to the class-II pyridoxal-phosphate-dependent aminotransferase family. Histidinol-phosphate aminotransferase subfamily. Homodimer. It depends on pyridoxal 5'-phosphate as a cofactor.

It carries out the reaction L-histidinol phosphate + 2-oxoglutarate = 3-(imidazol-4-yl)-2-oxopropyl phosphate + L-glutamate. It participates in amino-acid biosynthesis; L-histidine biosynthesis; L-histidine from 5-phospho-alpha-D-ribose 1-diphosphate: step 7/9. The sequence is that of Histidinol-phosphate aminotransferase 1 from Pseudomonas fluorescens (strain ATCC BAA-477 / NRRL B-23932 / Pf-5).